The sequence spans 329 residues: MKILFAGTPKPAAIVLEHLLTDPRLEVLGVITQPDARRGRGRSLHPSPVAEVAEGAGLKVHKWHSLGASSEDAAAVRETLAAYREAGATAVAVVAYGNLIPADLLDAVEHGWVNLHYSLLPRWRGAAPVQAAIAAGDQETGATIFRIEQGLDTGPMLSKKAYEIGIRETAEEVLIELTNSGKSLLADTLVELGEGSATPQPQPEEGATHAPKLHPADARIDFSAPAKVIQRRARAHTPAPGAWCTLDGQRYKFGLMLPVAEGEEFPELAPGQLWADKTRVLVGTGDTPLLVETIQPPGKKMMRAADWARGQQELLAQSPRFDIEEDTAK.

118 to 121 is a binding site for (6S)-5,6,7,8-tetrahydrofolate; the sequence is SLLP.

Belongs to the Fmt family.

It catalyses the reaction L-methionyl-tRNA(fMet) + (6R)-10-formyltetrahydrofolate = N-formyl-L-methionyl-tRNA(fMet) + (6S)-5,6,7,8-tetrahydrofolate + H(+). Attaches a formyl group to the free amino group of methionyl-tRNA(fMet). The formyl group appears to play a dual role in the initiator identity of N-formylmethionyl-tRNA by promoting its recognition by IF2 and preventing the misappropriation of this tRNA by the elongation apparatus. The protein is Methionyl-tRNA formyltransferase of Corynebacterium urealyticum (strain ATCC 43042 / DSM 7109).